Consider the following 519-residue polypeptide: MGLIEIVLLLVGMAVGAATGFILHKIVSAKRLQDARELADRIIEEARKEAQAHKKEVLIQGQDELFNQKRELEREFKEREHELKIRERRLQEQTERLEEKLEKLAQKEHDALSVEKELNRRERTLGLKEEELTQKIAEQDKKLQEISGLTSEEAKARIFSEVEARTRHEAGKMIRVIETEAKETASRSAQKILATAVQRYAGDFVNEQTVTAVSLPSEDMKGRIIGREGRNIRALEAATGVDLIIDDTPETVILSAYSPLRRQIAKMALERLISDGRIHPARIEDIVRKCEQELEVQLREVGEQATFDVGVHGIHPEIIKLLGQLKYRTSFSQNVLQHSMEVASLCGIMAAELGMDEKRAKRAGLLHDIGKAVDHDVEGPHAVIGADLAKKYGESKDIIHAIAAHHEDVPPKSALAVLVQAADSLSGARPGARKELLENYVKRLEDLEGIANGMEGVSKAYAIQAGREIRVLVNSDEVDDDTTYMLCKDISEKIEKNLTYPGQIRVTVIRERRAVGVAK.

The chain crosses the membrane as a helical span at residues 3 to 23 (LIEIVLLLVGMAVGAATGFIL). The region spanning 209–272 (TVTAVSLPSE…QIAKMALERL (64 aa)) is the KH domain. The HD domain maps to 335-428 (VLQHSMEVAS…VQAADSLSGA (94 aa)).

It belongs to the RNase Y family.

The protein resides in the cell membrane. Its function is as follows. Endoribonuclease that initiates mRNA decay. This chain is Ribonuclease Y, found in Oleidesulfovibrio alaskensis (strain ATCC BAA-1058 / DSM 17464 / G20) (Desulfovibrio alaskensis).